The sequence spans 313 residues: Ribosomal protein L11 methyltransferase (313 aa).

The S-adenosyl-L-methionine site is built by Thr164, Gly185, Asp207, and Asn249.

It belongs to the methyltransferase superfamily. PrmA family.

Its subcellular location is the cytoplasm. The catalysed reaction is L-lysyl-[protein] + 3 S-adenosyl-L-methionine = N(6),N(6),N(6)-trimethyl-L-lysyl-[protein] + 3 S-adenosyl-L-homocysteine + 3 H(+). Methylates ribosomal protein L11. This chain is Ribosomal protein L11 methyltransferase, found in Clostridium perfringens (strain ATCC 13124 / DSM 756 / JCM 1290 / NCIMB 6125 / NCTC 8237 / Type A).